The chain runs to 169 residues: DNA damage-inducible transcript 3 protein (169 aa).

An interaction with TRIB3 region spans residues 10 to 18 (FGTLSSWEL). Residues 10-26 (FGTLSSWELEAWYEDLQ) are N-terminal. Ser-14, Ser-15, Ser-30, and Ser-31 each carry phosphoserine; by CK2. Positions 32-139 (DENGGTYVSP…KVAQLAEENE (108 aa)) are disordered. The span at 74-89 (TSTSQSPHSPDSSQSS) shows a compositional bias: low complexity. Phosphoserine; by MAPK14 is present on residues Ser-79 and Ser-82. The bZIP domain maps to 99–162 (QGRTRKRKQS…EATRRALIDR (64 aa)). Residues 101-130 (RTRKRKQSGHSPARAGKQRMKEKEQENERK) form a basic motif region. A compositionally biased stretch (basic and acidic residues) spans 119 to 139 (RMKEKEQENERKVAQLAEENE). The tract at residues 134 to 148 (LAEENERLKQEIERL) is leucine-zipper.

Belongs to the bZIP family. In terms of assembly, heterodimer. Interacts with TCF7L2/TCF4, EP300/P300, HDAC1, HDAC5 and HDAC6. Interacts with TRIB3 which blocks its association with EP300/P300. Interacts with FOXO3, CEBPB and ATF4. Interacts with isoform AltDDIT3 of DDIT3. Ubiquitinated, leading to its degradation by the proteasome. In terms of processing, phosphorylation at serine residues by MAPK14 enhances its transcriptional activation activity while phosphorylation at serine residues by CK2 inhibits its transcriptional activation activity.

Its subcellular location is the cytoplasm. The protein resides in the nucleus. Multifunctional transcription factor in endoplasmic reticulum (ER) stress response. Plays an essential role in the response to a wide variety of cell stresses and induces cell cycle arrest and apoptosis in response to ER stress. Plays a dual role both as an inhibitor of CCAAT/enhancer-binding protein (C/EBP) function and as an activator of other genes. Acts as a dominant-negative regulator of C/EBP-induced transcription: dimerizes with members of the C/EBP family, impairs their association with C/EBP binding sites in the promoter regions, and inhibits the expression of C/EBP regulated genes. Positively regulates the transcription of TRIB3, IL6, IL8, IL23, TNFRSF10B/DR5, PPP1R15A/GADD34, BBC3/PUMA, BCL2L11/BIM and ERO1L. Negatively regulates; expression of BCL2 and MYOD1, ATF4-dependent transcriptional activation of asparagine synthetase (ASNS), CEBPA-dependent transcriptional activation of hepcidin (HAMP) and CEBPB-mediated expression of peroxisome proliferator-activated receptor gamma (PPARG). Together with ATF4, mediates ER-mediated cell death by promoting expression of genes involved in cellular amino acid metabolic processes, mRNA translation and the unfolded protein response (UPR) in response to ER stress. Inhibits the canonical Wnt signaling pathway by binding to TCF7L2/TCF4, impairing its DNA-binding properties and repressing its transcriptional activity. Plays a regulatory role in the inflammatory response through the induction of caspase-11 (CASP4/CASP11) which induces the activation of caspase-1 (CASP1) and both these caspases increase the activation of pro-IL1B to mature IL1B which is involved in the inflammatory response. Acts as a major regulator of postnatal neovascularization through regulation of endothelial nitric oxide synthase (NOS3)-related signaling. This is DNA damage-inducible transcript 3 protein (DDIT3) from Homo sapiens (Human).